Reading from the N-terminus, the 217-residue chain is Probable cutinase 3 (217 aa).

An N-terminal signal peptide occupies residues 1-17; that stretch reads MSLRSLFVAGLATLALA. 2 disulfide bridges follow: Cys39–Cys118 and Cys65–Cys79. Ser129 serves as the catalytic Nucleophile. Cys180 and Cys187 are oxidised to a cystine. The active site involves Asp184. The Proton donor/acceptor role is filled by His197.

Belongs to the cutinase family.

Its subcellular location is the secreted. It catalyses the reaction cutin + H2O = cutin monomers.. Catalyzes the hydrolysis of complex carboxylic polyesters found in the cell wall of plants. Degrades cutin, a macromolecule that forms the structure of the plant cuticle. This chain is Probable cutinase 3, found in Aspergillus fumigatus (strain CBS 144.89 / FGSC A1163 / CEA10) (Neosartorya fumigata).